Here is a 259-residue protein sequence, read N- to C-terminus: Peptide methionine sulfoxide reductase (259 aa).

A disordered region spans residues threonine 66–proline 90.

This sequence belongs to the MsrA Met sulfoxide reductase family.

The enzyme catalyses L-methionyl-[protein] + [thioredoxin]-disulfide + H2O = L-methionyl-(S)-S-oxide-[protein] + [thioredoxin]-dithiol. It catalyses the reaction [thioredoxin]-disulfide + L-methionine + H2O = L-methionine (S)-S-oxide + [thioredoxin]-dithiol. Functionally, has an important function as a repair enzyme for proteins that have been inactivated by oxidation. Catalyzes the reversible oxidation-reduction of methionine sulfoxide in proteins to methionine. The sequence is that of Peptide methionine sulfoxide reductase from Lactuca sativa (Garden lettuce).